A 227-amino-acid polypeptide reads, in one-letter code: Cytochrome c oxidase subunit 2 (227 aa).

At 1 to 14 (MAYPFQLGLQDATS) the chain is on the mitochondrial intermembrane side. Residues 15–45 (PIMEELTNFHDHTLMIVFLISSLVLYIISLM) form a helical membrane-spanning segment. Residues 46–59 (LTTKLTHTSTMDAQ) are Mitochondrial matrix-facing. Residues 60–87 (EVETIWTILPAVILILIALPSLRILYMM) form a helical membrane-spanning segment. Residues 88–227 (DEINNPVLTV…YFENWSASMI (140 aa)) lie on the Mitochondrial intermembrane side of the membrane. Residues histidine 161, cysteine 196, glutamate 198, cysteine 200, histidine 204, and methionine 207 each coordinate Cu cation. Glutamate 198 contributes to the Mg(2+) binding site. Tyrosine 218 is modified (phosphotyrosine).

It belongs to the cytochrome c oxidase subunit 2 family. Component of the cytochrome c oxidase (complex IV, CIV), a multisubunit enzyme composed of 14 subunits. The complex is composed of a catalytic core of 3 subunits MT-CO1, MT-CO2 and MT-CO3, encoded in the mitochondrial DNA, and 11 supernumerary subunits COX4I, COX5A, COX5B, COX6A, COX6B, COX6C, COX7A, COX7B, COX7C, COX8 and NDUFA4, which are encoded in the nuclear genome. The complex exists as a monomer or a dimer and forms supercomplexes (SCs) in the inner mitochondrial membrane with NADH-ubiquinone oxidoreductase (complex I, CI) and ubiquinol-cytochrome c oxidoreductase (cytochrome b-c1 complex, complex III, CIII), resulting in different assemblies (supercomplex SCI(1)III(2)IV(1) and megacomplex MCI(2)III(2)IV(2)). Found in a complex with TMEM177, COA6, COX18, COX20, SCO1 and SCO2. Interacts with TMEM177 in a COX20-dependent manner. Interacts with COX20. Interacts with COX16. It depends on Cu cation as a cofactor.

It is found in the mitochondrion inner membrane. The enzyme catalyses 4 Fe(II)-[cytochrome c] + O2 + 8 H(+)(in) = 4 Fe(III)-[cytochrome c] + 2 H2O + 4 H(+)(out). In terms of biological role, component of the cytochrome c oxidase, the last enzyme in the mitochondrial electron transport chain which drives oxidative phosphorylation. The respiratory chain contains 3 multisubunit complexes succinate dehydrogenase (complex II, CII), ubiquinol-cytochrome c oxidoreductase (cytochrome b-c1 complex, complex III, CIII) and cytochrome c oxidase (complex IV, CIV), that cooperate to transfer electrons derived from NADH and succinate to molecular oxygen, creating an electrochemical gradient over the inner membrane that drives transmembrane transport and the ATP synthase. Cytochrome c oxidase is the component of the respiratory chain that catalyzes the reduction of oxygen to water. Electrons originating from reduced cytochrome c in the intermembrane space (IMS) are transferred via the dinuclear copper A center (CU(A)) of subunit 2 and heme A of subunit 1 to the active site in subunit 1, a binuclear center (BNC) formed by heme A3 and copper B (CU(B)). The BNC reduces molecular oxygen to 2 water molecules using 4 electrons from cytochrome c in the IMS and 4 protons from the mitochondrial matrix. The polypeptide is Cytochrome c oxidase subunit 2 (MT-CO2) (Dacnomys millardi (Millard's rat)).